The sequence spans 276 residues: SRR1-like protein (276 aa).

At Ser-30 the chain carries Phosphoserine. Tyr-34 is subject to Phosphotyrosine.

This sequence belongs to the SRR1 family.

Functionally, possible regulator involved in a circadian clock input pathway. The sequence is that of SRR1-like protein from Drosophila melanogaster (Fruit fly).